The primary structure comprises 293 residues: Nucleotide-binding protein LBA0691 (293 aa).

13–20 (GMSGAGKT) provides a ligand contact to ATP. 63 to 66 (DLRV) is a GTP binding site.

This sequence belongs to the RapZ-like family.

Displays ATPase and GTPase activities. The protein is Nucleotide-binding protein LBA0691 of Lactobacillus acidophilus (strain ATCC 700396 / NCK56 / N2 / NCFM).